The following is a 281-amino-acid chain: Small ribosomal subunit protein uS2 (281 aa).

The protein belongs to the universal ribosomal protein uS2 family.

The chain is Small ribosomal subunit protein uS2 (rpsB) from Chlamydia muridarum (strain MoPn / Nigg).